The following is a 319-amino-acid chain: Acetyl-coenzyme A carboxylase carboxyl transferase subunit alpha (319 aa).

The 262-residue stretch at 35–296 (NIDEEVHRLR…KAQLLADLAD (262 aa)) folds into the CoA carboxyltransferase C-terminal domain.

Belongs to the AccA family. In terms of assembly, acetyl-CoA carboxylase is a heterohexamer composed of biotin carboxyl carrier protein (AccB), biotin carboxylase (AccC) and two subunits each of ACCase subunit alpha (AccA) and ACCase subunit beta (AccD).

The protein localises to the cytoplasm. The catalysed reaction is N(6)-carboxybiotinyl-L-lysyl-[protein] + acetyl-CoA = N(6)-biotinyl-L-lysyl-[protein] + malonyl-CoA. It functions in the pathway lipid metabolism; malonyl-CoA biosynthesis; malonyl-CoA from acetyl-CoA: step 1/1. Component of the acetyl coenzyme A carboxylase (ACC) complex. First, biotin carboxylase catalyzes the carboxylation of biotin on its carrier protein (BCCP) and then the CO(2) group is transferred by the carboxyltransferase to acetyl-CoA to form malonyl-CoA. This Escherichia coli O127:H6 (strain E2348/69 / EPEC) protein is Acetyl-coenzyme A carboxylase carboxyl transferase subunit alpha.